The following is a 155-amino-acid chain: Transcriptional repressor NrdR (155 aa).

A zinc finger spans residues 3–34 (CPFCGNIDTQVKDSRPAEDHVSIRRRRFCPAC). In terms of domain architecture, ATP-cone spans 49 to 139 (LVVIKSSGKR…VYKNFQAADD (91 aa)).

Belongs to the NrdR family. Zn(2+) serves as cofactor.

Its function is as follows. Negatively regulates transcription of bacterial ribonucleotide reductase nrd genes and operons by binding to NrdR-boxes. This Cereibacter sphaeroides (strain ATCC 17025 / ATH 2.4.3) (Rhodobacter sphaeroides) protein is Transcriptional repressor NrdR.